A 271-amino-acid polypeptide reads, in one-letter code: Putative phosphoenolpyruvate synthase regulatory protein (271 aa).

152 to 159 (GASRSGKT) serves as a coordination point for ADP.

This sequence belongs to the pyruvate, phosphate/water dikinase regulatory protein family. PSRP subfamily.

It carries out the reaction [pyruvate, water dikinase] + ADP = [pyruvate, water dikinase]-phosphate + AMP + H(+). The enzyme catalyses [pyruvate, water dikinase]-phosphate + phosphate + H(+) = [pyruvate, water dikinase] + diphosphate. Functionally, bifunctional serine/threonine kinase and phosphorylase involved in the regulation of the phosphoenolpyruvate synthase (PEPS) by catalyzing its phosphorylation/dephosphorylation. In Marinobacter nauticus (strain ATCC 700491 / DSM 11845 / VT8) (Marinobacter aquaeolei), this protein is Putative phosphoenolpyruvate synthase regulatory protein.